The following is a 184-amino-acid chain: Large ribosomal subunit protein uL22 (184 aa).

The interval 160-184 is disordered; sequence PEEEVAQKKKISQKKLKKQKLMARE. Residues 167-184 show a composition bias toward basic residues; sequence KKKISQKKLKKQKLMARE.

This sequence belongs to the universal ribosomal protein uL22 family. As to quaternary structure, component of the large ribosomal subunit. In terms of tissue distribution, expressed in pancreas, lung, colon, cystic duct, gall bladder, kidney and liver. Expressed at high levels in the well differentiated pancreatic tumor cell lines HPAF, COLO 357 and Capan-1, the moderately differentiated pancreatic tumor cell lines T3M-4, AsPc-1 and BxPc-3, the poorly differentiated pancreatic tumor cell line MIA PaCa-2, and the pancreatic tumor cell lines of undefined differentiation status such as SW979. Expressed at lower levels in the poorly differentiated pancreatic tumor cell lines HCG-25 and PANC-1.

Its subcellular location is the cytoplasm. In terms of biological role, component of the large ribosomal subunit. The ribosome is a large ribonucleoprotein complex responsible for the synthesis of proteins in the cell. This chain is Large ribosomal subunit protein uL22 (RPL17), found in Homo sapiens (Human).